A 784-amino-acid chain; its full sequence is PWWP domain-containing protein 2A (784 aa).

4 disordered regions span residues 1-32 (MAAVAGAPGPGEGGESEQDSETIPGERRLGRL), 244-272 (KPVESIQEESKSFHEEPLVKSEENSPEDV), 463-567 (AKEK…EMQD), and 605-654 (SSSA…SSKE). The segment covering 244 to 266 (KPVESIQEESKSFHEEPLVKSEE) has biased composition (basic and acidic residues). Residues 536-556 (TRYSATRSAGETPSEIQSPSN) show a composition bias toward polar residues. Over residues 605–614 (SSSASVCSSD) the composition is skewed to low complexity. Positions 684–744 (VGDIVWAKIY…LSQLTPFLEN (61 aa)) constitute a PWWP domain.

The protein localises to the nucleus. H2A.Z-specific chromatin binding protein which plays an important role in the neural crest cell differentiation and/or migration during early development and is essential for the development of the head and eye. Acts as an adapter between distinct nucleosome components (H3K36me3 or H2A.Z) and chromatin-modifying complexes, contributing to the regulation of the levels of histone acetylation at actively transcribed genes. The chain is PWWP domain-containing protein 2A (pwwp2a) from Xenopus tropicalis (Western clawed frog).